A 233-amino-acid chain; its full sequence is Large ribosomal subunit protein uL1 (233 aa).

Belongs to the universal ribosomal protein uL1 family. As to quaternary structure, part of the 50S ribosomal subunit.

Its function is as follows. Binds directly to 23S rRNA. The L1 stalk is quite mobile in the ribosome, and is involved in E site tRNA release. Protein L1 is also a translational repressor protein, it controls the translation of the L11 operon by binding to its mRNA. This is Large ribosomal subunit protein uL1 from Thermotoga maritima (strain ATCC 43589 / DSM 3109 / JCM 10099 / NBRC 100826 / MSB8).